Here is a 168-residue protein sequence, read N- to C-terminus: UPF0262 protein BBta_0898 (168 aa).

This sequence belongs to the UPF0262 family.

This is UPF0262 protein BBta_0898 from Bradyrhizobium sp. (strain BTAi1 / ATCC BAA-1182).